We begin with the raw amino-acid sequence, 1374 residues long: Alpha,alpha-trehalose-phosphate synthase [UDP-forming] 1 (1374 aa).

Disordered regions lie at residues 28 to 66 (DTGKVPTAPPDVFFSTENEPEDCTPVKMDPFDRPKSDKD), 86 to 117 (YTPGKEKGVDQDESDDMTESEDHDEMAKDDEG), and 1352 to 1374 (KADSYYDDSDTPMDQEDTPSKQQ). Basic and acidic residues-rich tracts occupy residues 56–66 (DPFDRPKSDKD) and 86–95 (YTPGKEKGVD). 2 stretches are compositionally biased toward acidic residues: residues 96–109 (QDESDDMTESEDHD) and 1356–1368 (YYDDSDTPMDQED).

This sequence in the N-terminal section; belongs to the glycosyltransferase 20 family. The protein in the C-terminal section; belongs to the gob-1 trehalose phosphatase family.

The catalysed reaction is D-glucose 6-phosphate + UDP-alpha-D-glucose = alpha,alpha-trehalose 6-phosphate + UDP + H(+). Catalyzes the production of trehalose from glucose-6-phosphate and UDP-alpha-D-glucose in a 2 step process. In Caenorhabditis briggsae, this protein is Alpha,alpha-trehalose-phosphate synthase [UDP-forming] 1 (tps-1).